A 463-amino-acid polypeptide reads, in one-letter code: Mitochondrial dynamics protein MID51 (463 aa).

Residues 1–23 (MAGAGERKGKKDDNGIGTAIDFV) are Mitochondrial intermembrane-facing. Residues 24–46 (LSNARLVLGVGGAAMLGIATLAV) traverse the membrane as a helical segment. Over 47–463 (KRMYDRAISA…LSEPEVLLQT (417 aa)) the chain is Cytoplasmic. The interval 49–195 (MYDRAISAPT…LSGSLYDDLQ (147 aa)) is dimerization. Residues Ser55, Ser59, Ser79, and Ser94 each carry the phosphoserine modification. The disordered stretch occupies residues 57–77 (PTSPTRLSHSGKRSWEEPNWM). The important for interaction with DNM1L stretch occupies residues 160–169 (AAVDICAELR). Residues Ser187, Ser189, and His201 each contribute to the ADP site. The important for interaction with DNM1L stretch occupies residues 234 to 243 (RRENPEYFPR). ADP contacts are provided by Ser340, Arg342, and Lys368.

This sequence belongs to the MID49/MID51 family. Homodimer. Interacts with DNM1L.

It localises to the mitochondrion outer membrane. Functionally, mitochondrial outer membrane protein which regulates mitochondrial fission/fusion dynamics. Promotes the recruitment and association of the fission mediator dynamin-related protein 1 (DNM1L) to the mitochondrial surface independently of the mitochondrial fission FIS1 and MFF proteins. Regulates DNM1L GTPase activity and DNM1L oligomerization. Binds ADP and can also bind GDP, although with lower affinity. Does not bind CDP, UDP, ATP, AMP or GTP. Inhibits DNM1L GTPase activity in the absence of bound ADP. Requires ADP to stimulate DNM1L GTPase activity and the assembly of DNM1L into long, oligomeric tubules with a spiral pattern, as opposed to the ring-like DNM1L oligomers observed in the absence of bound ADP. Does not require ADP for its function in recruiting DNM1L. This chain is Mitochondrial dynamics protein MID51 (Mief1), found in Mus musculus (Mouse).